The following is a 163-amino-acid chain: Putative NOL1/NOP2/Sun domain family member 5B (163 aa).

C93 acts as the Nucleophile in catalysis.

It belongs to the class I-like SAM-binding methyltransferase superfamily. RsmB/NOP family. Ubiquitous.

This is Putative NOL1/NOP2/Sun domain family member 5B (NSUN5P1) from Homo sapiens (Human).